Reading from the N-terminus, the 404-residue chain is S-adenosylmethionine synthase (404 aa).

Position 18 (His-18) interacts with ATP. Asp-20 contributes to the Mg(2+) binding site. Glu-46 contacts K(+). L-methionine-binding residues include Glu-59 and Gln-102. Residues 102 to 112 (QSPEIAQGVDH) form a flexible loop region. Residues 178 to 180 (DGK), 249 to 250 (KF), Asp-258, 264 to 265 (RK), Ala-281, and Lys-285 each bind ATP. Asp-258 serves as a coordination point for L-methionine. Lys-289 contributes to the L-methionine binding site.

It belongs to the AdoMet synthase family. As to quaternary structure, homotetramer; dimer of dimers. It depends on Mg(2+) as a cofactor. The cofactor is K(+).

It is found in the cytoplasm. The catalysed reaction is L-methionine + ATP + H2O = S-adenosyl-L-methionine + phosphate + diphosphate. The protein operates within amino-acid biosynthesis; S-adenosyl-L-methionine biosynthesis; S-adenosyl-L-methionine from L-methionine: step 1/1. Functionally, catalyzes the formation of S-adenosylmethionine (AdoMet) from methionine and ATP. The overall synthetic reaction is composed of two sequential steps, AdoMet formation and the subsequent tripolyphosphate hydrolysis which occurs prior to release of AdoMet from the enzyme. This is S-adenosylmethionine synthase from Rhodococcus jostii (strain RHA1).